We begin with the raw amino-acid sequence, 635 residues long: Threonine--tRNA ligase (635 aa).

In terms of domain architecture, TGS spans 1–61 (MIQITLPDSS…SQDSALSIVT (61 aa)). The tract at residues 242–533 (DHRKLGKELD…LIEEHAGALP (292 aa)) is catalytic. Zn(2+) is bound by residues cysteine 333, histidine 384, and histidine 510.

Belongs to the class-II aminoacyl-tRNA synthetase family. Homodimer. Requires Zn(2+) as cofactor.

It is found in the cytoplasm. The enzyme catalyses tRNA(Thr) + L-threonine + ATP = L-threonyl-tRNA(Thr) + AMP + diphosphate + H(+). Catalyzes the attachment of threonine to tRNA(Thr) in a two-step reaction: L-threonine is first activated by ATP to form Thr-AMP and then transferred to the acceptor end of tRNA(Thr). Also edits incorrectly charged L-seryl-tRNA(Thr). The chain is Threonine--tRNA ligase from Polaromonas naphthalenivorans (strain CJ2).